A 257-amino-acid chain; its full sequence is Zinc transporter ZupT (257 aa).

The next 8 helical transmembrane spans lie at leucine 5 to glycine 25, valine 32 to methionine 52, glycine 61 to leucine 81, alanine 109 to valine 129, leucine 137 to alanine 157, isoleucine 171 to isoleucine 191, leucine 195 to leucine 215, and glycine 236 to isoleucine 256. Positions 120 and 123 each coordinate Fe(2+). Zn(2+) is bound by residues glutamate 123 and histidine 148. Fe(2+) contacts are provided by asparagine 149, glutamate 152, and glutamate 181. Position 152 (glutamate 152) interacts with Zn(2+).

The protein belongs to the ZIP transporter (TC 2.A.5) family. ZupT subfamily.

The protein localises to the cell inner membrane. It carries out the reaction Zn(2+)(in) = Zn(2+)(out). In terms of biological role, mediates zinc uptake. May also transport other divalent cations. The polypeptide is Zinc transporter ZupT (Salmonella heidelberg (strain SL476)).